Reading from the N-terminus, the 876-residue chain is Alanine--tRNA ligase (876 aa).

Positions 565, 569, 667, and 671 each coordinate Zn(2+).

The protein belongs to the class-II aminoacyl-tRNA synthetase family. Zn(2+) is required as a cofactor.

It is found in the cytoplasm. The enzyme catalyses tRNA(Ala) + L-alanine + ATP = L-alanyl-tRNA(Ala) + AMP + diphosphate. In terms of biological role, catalyzes the attachment of alanine to tRNA(Ala) in a two-step reaction: alanine is first activated by ATP to form Ala-AMP and then transferred to the acceptor end of tRNA(Ala). Also edits incorrectly charged Ser-tRNA(Ala) and Gly-tRNA(Ala) via its editing domain. This is Alanine--tRNA ligase from Staphylococcus epidermidis (strain ATCC 35984 / DSM 28319 / BCRC 17069 / CCUG 31568 / BM 3577 / RP62A).